Here is a 328-residue protein sequence, read N- to C-terminus: Arabinose 5-phosphate isomerase KdsD (328 aa).

The SIS domain maps to 41 to 184 (ACEKMFNCTG…AVALLKARGF (144 aa)). Residues 75-76 (GT), His82, His88, 114-123 (ALIPVLKRLH), and 148-150 (KVP) contribute to the substrate site. His82 provides a ligand contact to Zn(2+). A CBS 1 domain is found at 210–268 (MHTGDEIPHVNKHATLRDALLEITRKNLGMTVICDESMKIDGIFTDGDLRRMFDMGGDM). A substrate-binding site is contributed by Glu275. A CBS 2 domain is found at 277–328 (MTPGGIRVRPGILAVDALNLMQSRHITSVLVADGDQLLGVLHMHDLLRAGVV).

It belongs to the SIS family. GutQ/KpsF subfamily. In terms of assembly, homotetramer.

The catalysed reaction is D-arabinose 5-phosphate = D-ribulose 5-phosphate. Its pathway is carbohydrate biosynthesis; 3-deoxy-D-manno-octulosonate biosynthesis; 3-deoxy-D-manno-octulosonate from D-ribulose 5-phosphate: step 1/3. The protein operates within bacterial outer membrane biogenesis; lipopolysaccharide biosynthesis. Functionally, involved in the biosynthesis of 3-deoxy-D-manno-octulosonate (KDO), a unique 8-carbon sugar component of lipopolysaccharides (LPSs). Catalyzes the reversible aldol-ketol isomerization between D-ribulose 5-phosphate (Ru5P) and D-arabinose 5-phosphate (A5P). This Salmonella typhi protein is Arabinose 5-phosphate isomerase KdsD (kdsD).